Here is a 450-residue protein sequence, read N- to C-terminus: Deoxyguanosinetriphosphate triphosphohydrolase-like protein (450 aa).

The region spanning 61-201 (RLTHSLEVAQ…AKLAPELNAD (141 aa)) is the HD domain.

The protein belongs to the dGTPase family. Type 2 subfamily.

The sequence is that of Deoxyguanosinetriphosphate triphosphohydrolase-like protein from Pasteurella multocida (strain Pm70).